A 295-amino-acid polypeptide reads, in one-letter code: Protease HtpX (295 aa).

A run of 2 helical transmembrane segments spans residues 4–24 (ILLF…TLSL) and 41–61 (SSLL…SLFI). His-147 serves as a coordination point for Zn(2+). The active site involves Glu-148. His-151 lines the Zn(2+) pocket. Transmembrane regions (helical) follow at residues 158 to 178 (VTLA…ARII) and 199 to 219 (VATI…VMWF). Position 224 (Glu-224) interacts with Zn(2+).

It belongs to the peptidase M48B family. The cofactor is Zn(2+).

It localises to the cell inner membrane. In Pseudomonas putida (strain W619), this protein is Protease HtpX.